The primary structure comprises 402 residues: Ferredoxin--NADP reductase (402 aa).

In terms of domain architecture, CpcD-like spans 18–74 (NRLFIYEVVGLGGDGRNENSLVRKSGTTFITVPYARMNQEMQRITKLGGKIVSIRPA). The tract at residues 80–101 (IVSEGQSSAQASAQSPMASSTK) is disordered. Low complexity predominate over residues 85–99 (QSSAQASAQSPMASS). The FAD-binding FR-type domain maps to 120 to 245 (KTPFLGKCIE…TGPVGKEMLL (126 aa)). FAD is bound by residues 179 to 182 (RLYS), 200 to 202 (CVR), Tyr206, 218 to 220 (VCS), and Thr260. Positions 182 and 202 each coordinate NADP(+). NADP(+) is bound by residues Thr260, 292 to 293 (VP), 322 to 323 (SR), Lys332, 332 to 336 (KVYVQ), 361 to 362 (GL), and Glu400.

This sequence belongs to the ferredoxin--NADP reductase type 1 family. FAD serves as cofactor.

The protein localises to the cellular thylakoid membrane. The enzyme catalyses 2 reduced [2Fe-2S]-[ferredoxin] + NADP(+) + H(+) = 2 oxidized [2Fe-2S]-[ferredoxin] + NADPH. The chain is Ferredoxin--NADP reductase (petH) from Picosynechococcus sp. (strain ATCC 27264 / PCC 7002 / PR-6) (Agmenellum quadruplicatum).